A 179-amino-acid chain; its full sequence is Ribosome maturation factor RimM (179 aa).

The PRC barrel domain maps to 102 to 175 (VEMWWDRDLV…RIVVDPPPGL (74 aa)).

This sequence belongs to the RimM family. In terms of assembly, binds ribosomal protein uS19.

It is found in the cytoplasm. Functionally, an accessory protein needed during the final step in the assembly of 30S ribosomal subunit, possibly for assembly of the head region. Essential for efficient processing of 16S rRNA. May be needed both before and after RbfA during the maturation of 16S rRNA. It has affinity for free ribosomal 30S subunits but not for 70S ribosomes. This Frankia casuarinae (strain DSM 45818 / CECT 9043 / HFP020203 / CcI3) protein is Ribosome maturation factor RimM.